A 220-amino-acid chain; its full sequence is NADH-quinone oxidoreductase subunit I (220 aa).

4Fe-4S ferredoxin-type domains are found at residues 71–102 (LQRL…IITH) and 112–141 (DSYT…MGNR). Residues Cys-82, Cys-85, Cys-88, Cys-92, Cys-121, Cys-124, Cys-127, and Cys-131 each coordinate [4Fe-4S] cluster. The tract at residues 187 to 220 (MQATPLDYVQEPSKEESKEETPTRSESHKGDENV) is disordered. Positions 198-220 (PSKEESKEETPTRSESHKGDENV) are enriched in basic and acidic residues.

The protein belongs to the complex I 23 kDa subunit family. NDH-1 is composed of 14 different subunits. Subunits NuoA, H, J, K, L, M, N constitute the membrane sector of the complex. The cofactor is [4Fe-4S] cluster.

It localises to the cell inner membrane. It catalyses the reaction a quinone + NADH + 5 H(+)(in) = a quinol + NAD(+) + 4 H(+)(out). In terms of biological role, NDH-1 shuttles electrons from NADH, via FMN and iron-sulfur (Fe-S) centers, to quinones in the respiratory chain. The immediate electron acceptor for the enzyme in this species is believed to be ubiquinone. Couples the redox reaction to proton translocation (for every two electrons transferred, four hydrogen ions are translocated across the cytoplasmic membrane), and thus conserves the redox energy in a proton gradient. This is NADH-quinone oxidoreductase subunit I from Helicobacter pylori (strain G27).